Consider the following 217-residue polypeptide: Peptide methionine sulfoxide reductase MsrA (217 aa).

The active site involves Cys-54.

This sequence belongs to the MsrA Met sulfoxide reductase family.

The catalysed reaction is L-methionyl-[protein] + [thioredoxin]-disulfide + H2O = L-methionyl-(S)-S-oxide-[protein] + [thioredoxin]-dithiol. It catalyses the reaction [thioredoxin]-disulfide + L-methionine + H2O = L-methionine (S)-S-oxide + [thioredoxin]-dithiol. In terms of biological role, has an important function as a repair enzyme for proteins that have been inactivated by oxidation. Catalyzes the reversible oxidation-reduction of methionine sulfoxide in proteins to methionine. The sequence is that of Peptide methionine sulfoxide reductase MsrA from Maricaulis maris (strain MCS10) (Caulobacter maris).